Reading from the N-terminus, the 155-residue chain is MLP-like protein 423 (155 aa).

The protein belongs to the MLP family.

The chain is MLP-like protein 423 (MLP423) from Arabidopsis thaliana (Mouse-ear cress).